A 309-amino-acid chain; its full sequence is Uricase (309 aa).

Alanine 2 bears the N-acetylalanine mark. Residues lysine 16 and threonine 63 each act as charge relay system in the active site. Positions 63, 64, 165, 182, 237, 238, and 264 each coordinate urate. Histidine 266 serves as the catalytic Charge relay system. A Microbody targeting signal motif is present at residues 307–309 (SKL).

This sequence belongs to the uricase family.

The protein resides in the peroxisome. The enzyme catalyses urate + O2 + H2O = 5-hydroxyisourate + H2O2. The protein operates within purine metabolism; urate degradation; (S)-allantoin from urate: step 1/3. Functionally, catalyzes the oxidation of uric acid to 5-hydroxyisourate, which is further processed to form (S)-allantoin. This chain is Uricase, found in Arabidopsis thaliana (Mouse-ear cress).